We begin with the raw amino-acid sequence, 390 residues long: Succinate--CoA ligase [ADP-forming] subunit beta (390 aa).

The ATP-grasp domain occupies 9 to 245; sequence KHLLKKYNIP…TTQEDEHETM (237 aa). ATP-binding positions include Lys-46, 53 to 55, Glu-99, Ser-102, and Glu-107; that span reads GRG. Mg(2+)-binding residues include Asn-200 and Asp-214. Residues Asn-265 and 322–324 contribute to the substrate site; that span reads GIV.

It belongs to the succinate/malate CoA ligase beta subunit family. As to quaternary structure, heterotetramer of two alpha and two beta subunits. The cofactor is Mg(2+).

The enzyme catalyses succinate + ATP + CoA = succinyl-CoA + ADP + phosphate. It catalyses the reaction GTP + succinate + CoA = succinyl-CoA + GDP + phosphate. Its pathway is carbohydrate metabolism; tricarboxylic acid cycle; succinate from succinyl-CoA (ligase route): step 1/1. Succinyl-CoA synthetase functions in the citric acid cycle (TCA), coupling the hydrolysis of succinyl-CoA to the synthesis of either ATP or GTP and thus represents the only step of substrate-level phosphorylation in the TCA. The beta subunit provides nucleotide specificity of the enzyme and binds the substrate succinate, while the binding sites for coenzyme A and phosphate are found in the alpha subunit. This chain is Succinate--CoA ligase [ADP-forming] subunit beta, found in Coxiella burnetii (strain Dugway 5J108-111).